The primary structure comprises 337 residues: PHD finger protein 11 (337 aa).

The C2HC pre-PHD-type zinc-finger motif lies at 42–78 (KRICALCPKDLECSVLYFAQSENIAAHENCLLYSSAL). The PHD-type zinc-finger motif lies at 108 to 160 (LKCTFCGKKGATVGCDLKSCFKNYHFFCAKNDHAVLQADGRTGIYKVFCQQHA).

Interacts with BRCA1 and RELA.

It localises to the nucleus. In terms of biological role, positive regulator of Th1-type cytokine gene expression. The sequence is that of PHD finger protein 11 (PHF11) from Bos taurus (Bovine).